The following is a 235-amino-acid chain: Orotidine 5'-phosphate decarboxylase (235 aa).

Residues D12, K34, 61-70 (DMKLLDIDNT), T116, R177, Q186, G206, and R207 contribute to the substrate site. The Proton donor role is filled by K63.

The protein belongs to the OMP decarboxylase family. Type 1 subfamily. As to quaternary structure, homodimer.

The catalysed reaction is orotidine 5'-phosphate + H(+) = UMP + CO2. It participates in pyrimidine metabolism; UMP biosynthesis via de novo pathway; UMP from orotate: step 2/2. Catalyzes the decarboxylation of orotidine 5'-monophosphate (OMP) to uridine 5'-monophosphate (UMP). The polypeptide is Orotidine 5'-phosphate decarboxylase (Rhizobium etli (strain ATCC 51251 / DSM 11541 / JCM 21823 / NBRC 15573 / CFN 42)).